The sequence spans 151 residues: NADPH-dependent 7-cyano-7-deazaguanine reductase (151 aa).

The Thioimide intermediate role is filled by cysteine 51. Catalysis depends on aspartate 58, which acts as the Proton donor. Substrate is bound by residues 73–75 (VES) and 92–93 (HE).

Belongs to the GTP cyclohydrolase I family. QueF type 1 subfamily.

It localises to the cytoplasm. The catalysed reaction is 7-aminomethyl-7-carbaguanine + 2 NADP(+) = 7-cyano-7-deazaguanine + 2 NADPH + 3 H(+). It participates in tRNA modification; tRNA-queuosine biosynthesis. Its function is as follows. Catalyzes the NADPH-dependent reduction of 7-cyano-7-deazaguanine (preQ0) to 7-aminomethyl-7-deazaguanine (preQ1). The polypeptide is NADPH-dependent 7-cyano-7-deazaguanine reductase (Bacteroides fragilis (strain YCH46)).